A 279-amino-acid polypeptide reads, in one-letter code: Movement protein (279 aa).

A disordered region spans residues 247-279 (ESEELNVESPPAAIGSSSASRSEAFRPQVVNGL). Residues 254-268 (ESPPAAIGSSSASRS) are compositionally biased toward low complexity.

This sequence belongs to the cucumovirus movement protein family.

The protein resides in the host cell junction. Its subcellular location is the host plasmodesma. Its function is as follows. Transports viral genome to neighboring plant cells directly through plasmosdesmata, without any budding. The movement protein allows efficient cell to cell propagation, by bypassing the host cell wall barrier. Acts by forming a tubular structure at the host plasmodesmata, enlarging it enough to allow free passage of virion capsids. This Cucumis sativus (Cucumber) protein is Movement protein.